Reading from the N-terminus, the 249-residue chain is Exosome complex component Rrp41 (249 aa).

The protein belongs to the RNase PH family. Rrp41 subfamily. As to quaternary structure, component of the archaeal exosome complex. Forms a hexameric ring-like arrangement composed of 3 Rrp41-Rrp42 heterodimers. The hexameric ring associates with a trimer of Rrp4 and/or Csl4 subunits.

It is found in the cytoplasm. Its function is as follows. Catalytic component of the exosome, which is a complex involved in RNA degradation. Has 3'-&gt;5' exoribonuclease activity. Can also synthesize heteromeric RNA-tails. The polypeptide is Exosome complex component Rrp41 (Pyrococcus abyssi (strain GE5 / Orsay)).